The primary structure comprises 285 residues: MKKTLIALAIAASAASGMAHAWMTGDFNGSVDIGGSITADDYRQKWEWKVGTGLNGFGNVLNDLTNGGTKLTITVTGNKPILLGRTKEAFATPVSGGVDGIPQIAFTDYEGASVKLRNTDGETNKGLAYFVLPMKNAEGTKVGSVKVNASYAGVFGKGGVTSADGELFSLFADGLRAIFYGGLTTTVSGAALTSGSAAAARTELFGSLSRNDILGQIQRVNANITSLVDVAGSYREDMEYTDGTVVSAAYALGIANGQTIEATFNQAVTTSTQWSAPLNVAITYY.

The N-terminal stretch at 1–21 (MKKTLIALAIAASAASGMAHA) is a signal peptide.

This sequence belongs to the fimbrial K88 protein family. As to quaternary structure, K88 fimbria, 0.1-1 micrometer in length and 7 nanometers in diameter, is composed of about 100 identical subunits.

The protein resides in the fimbrium. In terms of biological role, K88 major fimbrial subunit. Fimbriae (also called pili), are polar filaments radiating from the surface of the bacterium to a length of 0.5-1.5 micrometers and numbering 100-300 per cell. They enable bacteria to colonize the epithelium of specific host organs. This chain is K88 fimbrial protein AB (faeG), found in Escherichia coli.